We begin with the raw amino-acid sequence, 97 residues long: Large ribosomal subunit protein uL23 (97 aa).

The protein belongs to the universal ribosomal protein uL23 family. As to quaternary structure, part of the 50S ribosomal subunit. Contacts protein L29, and trigger factor when it is bound to the ribosome.

In terms of biological role, one of the early assembly proteins it binds 23S rRNA. One of the proteins that surrounds the polypeptide exit tunnel on the outside of the ribosome. Forms the main docking site for trigger factor binding to the ribosome. The sequence is that of Large ribosomal subunit protein uL23 from Acidithiobacillus ferrooxidans (strain ATCC 23270 / DSM 14882 / CIP 104768 / NCIMB 8455) (Ferrobacillus ferrooxidans (strain ATCC 23270)).